The sequence spans 240 residues: UPF0502 protein Veis_2102 (240 aa).

It belongs to the UPF0502 family.

The polypeptide is UPF0502 protein Veis_2102 (Verminephrobacter eiseniae (strain EF01-2)).